A 356-amino-acid chain; its full sequence is Peptide chain release factor 1 (356 aa).

The residue at position 232 (Gln-232) is an N5-methylglutamine.

Belongs to the prokaryotic/mitochondrial release factor family. Methylated by PrmC. Methylation increases the termination efficiency of RF1.

Its subcellular location is the cytoplasm. In terms of biological role, peptide chain release factor 1 directs the termination of translation in response to the peptide chain termination codons UAG and UAA. The sequence is that of Peptide chain release factor 1 from Thermoanaerobacter pseudethanolicus (strain ATCC 33223 / 39E) (Clostridium thermohydrosulfuricum).